We begin with the raw amino-acid sequence, 552 residues long: L-ascorbate oxidase (552 aa).

Plastocyanin-like domains follow at residues 1-122 (SQIR…LIVD) and 134-300 (DGEI…NYLP). Disulfide bonds link Cys-19/Cys-201, Cys-81/Cys-538, and Cys-180/Cys-193. Cu cation is bound by residues His-60 and His-62. An N-linked (GlcNAc...) asparagine glycan is attached at Asn-92. 2 residues coordinate Cu cation: His-104 and His-106. N-linked (GlcNAc...) asparagine glycosylation is found at Asn-325 and Asn-440. Positions 344 to 523 (NRRIFLLNTQ…HMGMGVVFAE (180 aa)) constitute a Plastocyanin-like 3 domain. His-445, His-448, His-450, His-506, Cys-507, His-508, His-512, and Met-517 together coordinate Cu cation.

It belongs to the multicopper oxidase family. As to quaternary structure, dimer. Requires Cu cation as cofactor.

The protein localises to the secreted. The catalysed reaction is 4 L-ascorbate + O2 = 4 monodehydro-L-ascorbate radical + 2 H2O. May be involved in a redox system involving ascorbic acid. The chain is L-ascorbate oxidase from Cucurbita pepo var. melopepo (Zucchini).